Reading from the N-terminus, the 454-residue chain is Neuraminidase (454 aa).

Over 1–6 (MNPNQK) the chain is Intravirion. Residues 7 to 27 (IITIGSICLVVGLISLILQIG) traverse the membrane as a helical segment. The tract at residues 11-33 (GSICLVVGLISLILQIGNIISIW) is involved in apical transport and lipid raft association. Residues 28–454 (NIISIWISHS…GAELPFSIDK (427 aa)) lie on the Virion surface side of the membrane. The hypervariable stalk region stretch occupies residues 36-75 (HSIQTGSQNHTGICNQNIITYKNSTWVKDTTSVILTGNSS). N-linked (GlcNAc...) asparagine; by host glycans are attached at residues N44, N58, and N73. A head of neuraminidase region spans residues 76–454 (LCPIRGWAIY…GAELPFSIDK (379 aa)). Cystine bridges form between C77–C402, C109–C114, C169–C216, C218–C223, C264–C277, C266–C275, C303–C320, and C406–C431. R103 is a binding site for substrate. N-linked (GlcNAc...) asparagine; by host glycosylation occurs at N131. D136 serves as the catalytic Proton donor/acceptor. R137 contacts substrate. N-linked (GlcNAc...) asparagine; by host glycosylation occurs at N220. 262–263 (EE) lines the substrate pocket. Position 278 (R278) interacts with substrate. The Ca(2+) site is built by D279, G283, D309, and N329. Residue R353 coordinates substrate. Y387 (nucleophile) is an active-site residue.

This sequence belongs to the glycosyl hydrolase 34 family. Homotetramer. Ca(2+) serves as cofactor. N-glycosylated.

The protein resides in the virion membrane. Its subcellular location is the host apical cell membrane. The catalysed reaction is Hydrolysis of alpha-(2-&gt;3)-, alpha-(2-&gt;6)-, alpha-(2-&gt;8)- glycosidic linkages of terminal sialic acid residues in oligosaccharides, glycoproteins, glycolipids, colominic acid and synthetic substrates.. Its activity is regulated as follows. Inhibited by the neuraminidase inhibitors zanamivir (Relenza) and oseltamivir (Tamiflu). These drugs interfere with the release of progeny virus from infected cells and are effective against all influenza strains. Resistance to neuraminidase inhibitors is quite rare. In terms of biological role, catalyzes the removal of terminal sialic acid residues from viral and cellular glycoconjugates. Cleaves off the terminal sialic acids on the glycosylated HA during virus budding to facilitate virus release. Additionally helps virus spread through the circulation by further removing sialic acids from the cell surface. These cleavages prevent self-aggregation and ensure the efficient spread of the progeny virus from cell to cell. Otherwise, infection would be limited to one round of replication. Described as a receptor-destroying enzyme because it cleaves a terminal sialic acid from the cellular receptors. May facilitate viral invasion of the upper airways by cleaving the sialic acid moieties on the mucin of the airway epithelial cells. Likely to plays a role in the budding process through its association with lipid rafts during intracellular transport. May additionally display a raft-association independent effect on budding. Plays a role in the determination of host range restriction on replication and virulence. Sialidase activity in late endosome/lysosome traffic seems to enhance virus replication. This chain is Neuraminidase, found in Aves (Human).